A 708-amino-acid polypeptide reads, in one-letter code: Exocyst complex component 5 (708 aa).

At Ala2 the chain carries N-acetylalanine. Residues 40–101 adopt a coiled-coil conformation; it reads KRLLEEFVNH…AFQHFQELDE (62 aa). Phosphothreonine occurs at positions 122, 395, and 405. Ser412 is subject to Phosphoserine.

This sequence belongs to the SEC10 family. The exocyst complex is composed of EXOC1, EXOC2, EXOC3, EXOC4, EXOC5, EXOC6, EXOC7 and EXOC8. Interacts with EXOC3L1.

The protein resides in the cytoplasm. Its subcellular location is the midbody. Component of the exocyst complex involved in the docking of exocytic vesicles with fusion sites on the plasma membrane. The polypeptide is Exocyst complex component 5 (Exoc5) (Mus musculus (Mouse)).